The sequence spans 462 residues: Lysyl endopeptidase (462 aa).

Positions 1 to 24 are cleaved as a signal peptide; it reads MHKRTYLNACLVLALAAGASQALA. Positions 25-211 are excised as a propeptide; it reads APGASEMAGD…VSYFADSLYK (187 aa). Disulfide bonds link Cys224/Cys435, Cys230/Cys305, and Cys262/Cys284. Active-site charge relay system residues include His283, Asp333, and Ser409.

Belongs to the peptidase S1 family. In terms of processing, experiments performed in E.coli. Processing of pro-endopeptidase to mature endopeptidase is probably autocatalytic, as mutations in the probable active site residues prevent processing, and purified inactive pro-endopeptidase disappears in the presence of active endopeptidase.

The protein localises to the secreted. The catalysed reaction is Preferential cleavage: Lys-|-Xaa, including Lys-|-Pro.. Lysine-specific endoprotease. Involved in corneal virulence. In Pseudomonas aeruginosa (strain ATCC 15692 / DSM 22644 / CIP 104116 / JCM 14847 / LMG 12228 / 1C / PRS 101 / PAO1), this protein is Lysyl endopeptidase (prpL).